We begin with the raw amino-acid sequence, 348 residues long: tRNA pseudouridine synthase D (348 aa).

The active-site Nucleophile is the Asp-78. Residues 150-304 (GLPNFFGPQR…AEGTRRAARL (155 aa)) enclose the TRUD domain.

It belongs to the pseudouridine synthase TruD family.

The enzyme catalyses uridine(13) in tRNA = pseudouridine(13) in tRNA. In terms of biological role, responsible for synthesis of pseudouridine from uracil-13 in transfer RNAs. This is tRNA pseudouridine synthase D from Anaeromyxobacter dehalogenans (strain 2CP-1 / ATCC BAA-258).